The chain runs to 397 residues: SET domain-containing protein 4 (397 aa).

The SET domain occupies Ala-29–Gly-245. Tyr-244 contributes to the S-adenosyl-L-methionine binding site.

The protein belongs to the class V-like SAM-binding methyltransferase superfamily. SETD4 family.

The protein resides in the nucleus. It catalyses the reaction L-lysyl(79)-[histone H3] + 3 S-adenosyl-L-methionine = N(6),N(6),N(6)-trimethyl-L-lysyl(79)-[histone H3] + 3 S-adenosyl-L-homocysteine + 3 H(+). The enzyme catalyses L-lysyl(20)-[histone H4] + S-adenosyl-L-methionine = N(6)-methyl-L-lysyl(20)-[histone H4] + S-adenosyl-L-homocysteine + H(+). The catalysed reaction is N(6)-methyl-L-lysyl(20)-[histone H4] + S-adenosyl-L-methionine = N(6),N(6)-dimethyl-L-lysyl(20)-[histone H4] + S-adenosyl-L-homocysteine + H(+). It carries out the reaction N(6),N(6)-dimethyl-L-lysyl(20)-[histone H4] + S-adenosyl-L-methionine = N(6),N(6),N(6)-trimethyl-L-lysyl(20)-[histone H4] + S-adenosyl-L-homocysteine + H(+). In terms of biological role, protein-lysine N-methyltransferase involved in the regulation of cell quiescence by catalyzing the trimethylation of 'Lys-20' of histone H4 and 'Lys-79' of histone H3 (H4K20me3 and H3K79me3, respectively) during diapause formation, a state of obligate dormancy. The polypeptide is SET domain-containing protein 4 (Artemia parthenogenetica (Brine shrimp)).